The following is a 747-amino-acid chain: Protein FAM83C (747 aa).

Positions 1–309 (MFGGPGPGVL…LYAESQPVEG (309 aa)) are DUF1669. Disordered regions lie at residues 322–352 (LRPP…SSIK), 374–412 (TGVV…LYRA), 462–484 (LSRF…GRWV), 517–550 (AREV…SPSQ), 588–633 (NQSR…LGHS), 646–672 (GEGP…DEKR), and 692–715 (ARQG…DLVR). The span at 328 to 350 (ALAFRPDVPSPTSSLPSSTSLSS) shows a compositional bias: low complexity. The segment covering 390–402 (GQPSLHRQLSDPN) has biased composition (polar residues). The span at 697 to 707 (EPGGPKGGHLN) shows a compositional bias: gly residues.

It belongs to the FAM83 family. In terms of assembly, may interact with RAF1. In terms of processing, phosphorylated in vitro by CSNK1A1.

The protein localises to the cytoplasm. May play a role in MAPK signaling. This Homo sapiens (Human) protein is Protein FAM83C.